A 120-amino-acid polypeptide reads, in one-letter code: Peptidyl-tRNA hydrolase (120 aa).

Belongs to the PTH2 family.

The protein localises to the cytoplasm. It catalyses the reaction an N-acyl-L-alpha-aminoacyl-tRNA + H2O = an N-acyl-L-amino acid + a tRNA + H(+). The natural substrate for this enzyme may be peptidyl-tRNAs which drop off the ribosome during protein synthesis. The polypeptide is Peptidyl-tRNA hydrolase (Pyrobaculum aerophilum (strain ATCC 51768 / DSM 7523 / JCM 9630 / CIP 104966 / NBRC 100827 / IM2)).